The chain runs to 516 residues: Myocyte-specific enhancer factor 2A homolog (516 aa).

Positions 1-100 are interaction with hdac9; sequence MGRKKIQITR…KGLNGCESPD (100 aa). The MADS-box domain maps to 3–57; sequence RKKIQITRIMDERNRQVTFTKRKFGLMKKAYELSVLCDCEIALIIFNSSNKLFQY. Positions 58–86 form a DNA-binding region, mef2-type; that stretch reads ASTDMDKVLLKYTEYNEPHESRTNSDIVE. Residues 318-339 are disordered; the sequence is PSSKGMMPPLNTQRVTSSQGTQ. Polar residues predominate over residues 327–339; the sequence is LNTQRVTSSQGTQ. Phosphothreonine; by NLK is present on T343. At S386 the chain carries Phosphoserine; by NLK. Residues 420–433 are compositionally biased toward polar residues; sequence GSNLSINTNQNINI. The segment at 420–516 is disordered; that stretch reads GSNLSINTNQ…KRMRMDAWVT (97 aa). The segment covering 465–475 has biased composition (low complexity); sequence DSLSSSSSSYD. 2 stretches are compositionally biased toward basic and acidic residues: residues 476–486 and 497–516; these read GSDREDVRNDF and NNED…AWVT.

This sequence belongs to the MEF2 family. Interacts with hdac9 and nlk2. In terms of tissue distribution, restricted to the somitic mesoderm of early embryos. Expressed in the head region of neurula stage embryos and in body muscle (myotomes) of the tadpole. Expressed in all tissues examined in the adult.

It localises to the nucleus. Its function is as follows. May regulate muscle-specific transcription in the embryo and may regulate transcription of a variety of cell types in the adult. Binds to the sequence 5'-CTA[TA]4TAR-3'. Acts downstream of nlk2 in anterior neural development, including eye formation. The polypeptide is Myocyte-specific enhancer factor 2A homolog (mef2a) (Xenopus laevis (African clawed frog)).